The chain runs to 163 residues: SsrA-binding protein (163 aa).

This sequence belongs to the SmpB family.

The protein localises to the cytoplasm. Functionally, required for rescue of stalled ribosomes mediated by trans-translation. Binds to transfer-messenger RNA (tmRNA), required for stable association of tmRNA with ribosomes. tmRNA and SmpB together mimic tRNA shape, replacing the anticodon stem-loop with SmpB. tmRNA is encoded by the ssrA gene; the 2 termini fold to resemble tRNA(Ala) and it encodes a 'tag peptide', a short internal open reading frame. During trans-translation Ala-aminoacylated tmRNA acts like a tRNA, entering the A-site of stalled ribosomes, displacing the stalled mRNA. The ribosome then switches to translate the ORF on the tmRNA; the nascent peptide is terminated with the 'tag peptide' encoded by the tmRNA and targeted for degradation. The ribosome is freed to recommence translation, which seems to be the essential function of trans-translation. The chain is SsrA-binding protein from Shewanella baltica (strain OS223).